A 183-amino-acid chain; its full sequence is Threonylcarbamoyl-AMP synthase (183 aa).

In terms of domain architecture, YrdC-like spans 1-183; the sequence is MNIQQIVEQL…LFTHQLFRQG (183 aa).

It belongs to the SUA5 family. TsaC subfamily.

It is found in the cytoplasm. The catalysed reaction is L-threonine + hydrogencarbonate + ATP = L-threonylcarbamoyladenylate + diphosphate + H2O. Functionally, required for the formation of a threonylcarbamoyl group on adenosine at position 37 (t(6)A37) in tRNAs that read codons beginning with adenine. Catalyzes the conversion of L-threonine, HCO(3)(-)/CO(2) and ATP to give threonylcarbamoyl-AMP (TC-AMP) as the acyladenylate intermediate, with the release of diphosphate. The sequence is that of Threonylcarbamoyl-AMP synthase from Pasteurella multocida (strain Pm70).